Reading from the N-terminus, the 528-residue chain is Ulvan lyase, short isoform (528 aa).

The N-terminal stretch at M1–A29 is a signal peptide. The N-palmitoyl cysteine moiety is linked to residue C30. C30 carries the S-diacylglycerol cysteine lipid modification. S151–H152 is a substrate binding site. H152 (proton donor/acceptor) is an active-site residue. D218, D228, and K230 together coordinate Ca(2+). Residues Y309 and R326 each coordinate substrate. Residues N329, D332, and F334 each contribute to the Ca(2+) site. A substrate-binding site is contributed by H390.

This sequence belongs to the polysaccharide lyase 24 family.

Its subcellular location is the secreted. It localises to the cell membrane. Functionally, ulvan lyase involved in ulvan degradation. Ulvan is the main polysaccharide component of the Ulvales (green seaweed) cell wall. It is composed of disaccharide building blocks comprising 3-sulfated rhamnose (Rha3S) linked to D-glucuronic acid (GlcA), L-iduronic acid (IduA), or D-xylose (Xyl). Ulvan lyase catalyzes preferentially the endolytic cleavage of the glycosidic bond between Rha3S and the uronic acid GlcA, but not IduA, producing oligosaccharides that have unsaturated 4-deoxy-L-threo-hex-4-enopyranosiduronic acid (deltaUA) at the non-reducing end. The most abundant end products in the degradation of the ulvan polysaccharide were deltaUA-Rha3S disaccharides and deltaUA-Rha3S-IduA-Rha3S and deltaUA-Rha3S-Xyl-Rha3S tetrasaccharides. The protein is Ulvan lyase, short isoform of Alteromonas sp. (strain LOR).